The primary structure comprises 100 residues: Large ribosomal subunit protein eL21 (100 aa).

The protein belongs to the eukaryotic ribosomal protein eL21 family.

This Pyrobaculum aerophilum (strain ATCC 51768 / DSM 7523 / JCM 9630 / CIP 104966 / NBRC 100827 / IM2) protein is Large ribosomal subunit protein eL21.